Reading from the N-terminus, the 964-residue chain is Syndetin (964 aa).

M1 carries the post-translational modification N-acetylmethionine. The tract at residues 1–25 (MQKIKSLMTRQGLKSPPESLNDLGA) is disordered. The residue at position 15 (S15) is a Phosphoserine. Coiled-coil stretches lie at residues 81–107 (LNLQ…VADL) and 216–244 (YSCI…LSKI). S494, S498, S559, and S561 each carry phosphoserine. Positions 532 to 563 (DEETEDVLASNGYESDEQEKSAYQDYDSDSDV) are disordered. K963 participates in a covalent cross-link: Glycyl lysine isopeptide (Lys-Gly) (interchain with G-Cter in SUMO1); alternate. Residue K963 forms a Glycyl lysine isopeptide (Lys-Gly) (interchain with G-Cter in SUMO2); alternate linkage.

It belongs to the syndetin family. In terms of assembly, component of the endosome-associated retrograde protein (EARP) complex, composed of VPS51, VPS52, VPS53 and VPS50/Syndetin. The EARP complex interacts with EIPR1. Interacts with VPS51 and VPS53 in an EIPR1-independent manner. As to expression, expressed in the brain (at protein level).

It is found in the recycling endosome. It localises to the membrane. Its function is as follows. Acts as a component of the EARP complex that is involved in endocytic recycling. The EARP complex associates with Rab4-positive endosomes and promotes recycling of internalized transferrin receptor (TFRC) to the plasma membrane. Within the EARP complex, required to tether the complex to recycling endosomes. Not involved in retrograde transport from early and late endosomes to the trans-Golgi network (TGN). This is Syndetin from Rattus norvegicus (Rat).